Reading from the N-terminus, the 306-residue chain is Reaction center protein M chain (306 aa).

A run of 3 helical transmembrane segments spans residues 53–79, 111–140, and 143–168; these read GTTGVLSLVFGFFAIEIIGFNLLASVN, GGWWQIAGFFLTTSILLWWVRMYRRARALK, and THTAWAFASAIFLFLSLGFIRPLLMG. 2 residues coordinate (7R,8Z)-bacteriochlorophyll b: H181 and H201. A helical membrane pass occupies residues 198–226; the sequence is NPFHMLSIAFLYGSALLSAMHGATILAVS. 2 residues coordinate Fe cation: H218 and E233. Residue W251 participates in a ubiquinone binding. A helical transmembrane segment spans residues 260-286; that stretch reads TMESIHRWAWWFAVLCTFTGAIGILLT. A Fe cation-binding site is contributed by H265.

It belongs to the reaction center PufL/M/PsbA/D family. In terms of assembly, reaction center is composed of four bacteriochlorophylls, two bacteriopheophytins, two ubiquinones, one iron, and three highly hydrophobic polypeptide chains (designated L, M, and H).

It is found in the cellular chromatophore membrane. The reaction center is a membrane-bound complex that mediates the initial photochemical event in the electron transfer process of photosynthesis. The sequence is that of Reaction center protein M chain (pufM) from Rhodospirillum rubrum.